A 513-amino-acid polypeptide reads, in one-letter code: Light-independent protochlorophyllide reductase subunit B (513 aa).

Aspartate 36 contacts [4Fe-4S] cluster. Residue aspartate 299 is the Proton donor of the active site. Glycine 434–methionine 435 lines the substrate pocket.

The protein belongs to the ChlB/BchB/BchZ family. As to quaternary structure, protochlorophyllide reductase is composed of three subunits; ChlL, ChlN and ChlB. Forms a heterotetramer of two ChlB and two ChlN subunits. It depends on [4Fe-4S] cluster as a cofactor.

The protein localises to the plastid. Its subcellular location is the chloroplast. It catalyses the reaction chlorophyllide a + oxidized 2[4Fe-4S]-[ferredoxin] + 2 ADP + 2 phosphate = protochlorophyllide a + reduced 2[4Fe-4S]-[ferredoxin] + 2 ATP + 2 H2O. The protein operates within porphyrin-containing compound metabolism; chlorophyll biosynthesis (light-independent). In terms of biological role, component of the dark-operative protochlorophyllide reductase (DPOR) that uses Mg-ATP and reduced ferredoxin to reduce ring D of protochlorophyllide (Pchlide) to form chlorophyllide a (Chlide). This reaction is light-independent. The NB-protein (ChlN-ChlB) is the catalytic component of the complex. The chain is Light-independent protochlorophyllide reductase subunit B from Cycas taitungensis (Prince sago).